A 79-amino-acid chain; its full sequence is ATP synthase subunit c (79 aa).

2 helical membrane-spanning segments follow: residues 11–31 and 53–73; these read IAVA…IGIL and FFVV…LGLY.

It belongs to the ATPase C chain family. As to quaternary structure, F-type ATPases have 2 components, F(1) - the catalytic core - and F(0) - the membrane proton channel. F(1) has five subunits: alpha(3), beta(3), gamma(1), delta(1), epsilon(1). F(0) has three main subunits: a(1), b(2) and c(10-14). The alpha and beta chains form an alternating ring which encloses part of the gamma chain. F(1) is attached to F(0) by a central stalk formed by the gamma and epsilon chains, while a peripheral stalk is formed by the delta and b chains.

It localises to the cell membrane. In terms of biological role, f(1)F(0) ATP synthase produces ATP from ADP in the presence of a proton or sodium gradient. F-type ATPases consist of two structural domains, F(1) containing the extramembraneous catalytic core and F(0) containing the membrane proton channel, linked together by a central stalk and a peripheral stalk. During catalysis, ATP synthesis in the catalytic domain of F(1) is coupled via a rotary mechanism of the central stalk subunits to proton translocation. Its function is as follows. Key component of the F(0) channel; it plays a direct role in translocation across the membrane. A homomeric c-ring of between 10-14 subunits forms the central stalk rotor element with the F(1) delta and epsilon subunits. The polypeptide is ATP synthase subunit c (Buchnera aphidicola subsp. Schizaphis graminum (strain Sg)).